Reading from the N-terminus, the 460-residue chain is Solute carrier family 52, riboflavin transporter, member 3 (460 aa).

Residues 1 to 6 (MAFLTH) are Cytoplasmic-facing. Residues 7 to 27 (LLVCVFGMGSWVAINGLWVEL) traverse the membrane as a helical segment. At 28–37 (PLLVTELPEA) the chain is on the extracellular side. A helical membrane pass occupies residues 38–58 (WYLPSYLTVVIQLANIGPLLV). The Cytoplasmic portion of the chain corresponds to 59-71 (TLMHRFRPGCLSE). Residues 72–92 (VPVIFLILCVGTAACILLAFL) form a helical membrane-spanning segment. Residues 93-105 (WNVTSWIQGGQHS) lie on the Extracellular side of the membrane. Asn94 carries an N-linked (GlcNAc...) asparagine glycan. Residues 106-126 (VAFIVLTFFLALVDCTSSVTF) traverse the membrane as a helical segment. Residues 127–137 (LPFMSQLPTYY) are Cytoplasmic-facing. Residues 138 to 158 (LTTFFIGEGLSGLLPALVALV) traverse the membrane as a helical segment. At 159–211 (QGSGITTCVNVTETPGTTLNTMETPITQGNLSPSLPSPSWHQESRYLAPRFSP) the chain is on the extracellular side. A glycan (N-linked (GlcNAc...) asparagine) is linked at Asn168. Residues 212 to 232 (LLFFLLLSFLTGCCLVAFFLL) form a helical membrane-spanning segment. Residues 233–291 (QRQPWGRQGSIEDLLHSQVTLHSIRPRDTEDTSSLGAPVSSPGKGSVEASVASLRPAQL) are Cytoplasmic-facing. Ser242 and Ser266 each carry phosphoserine. A helical transmembrane segment spans residues 292–312 (AFIYSVVAFVNALTNGVLPSV). At 313 to 326 (QTYSCLPYGPVAYH) the chain is on the extracellular side. The helical transmembrane segment at 327-347 (LSATLSSVASPLACFLPIFLP) threads the bilayer. Over 348-350 (NRS) the chain is Cytoplasmic. Residues 351–371 (LLFLGVLTVLGTGFGAYNMAM) traverse the membrane as a helical segment. Over 372 to 387 (AAMSPCPVLQGHWGGE) the chain is Extracellular. Residues Cys377 and Cys454 are joined by a disulfide bond. A helical membrane pass occupies residues 388 to 408 (VLIVLSWVLFAACLSYVKVML). Topologically, residues 409–418 (GVILRDRSRS) are cytoplasmic. Residues 419–439 (ALLWCGAAVQLGSLIGALLMF) form a helical membrane-spanning segment. Residues 440–460 (PLVNVLKLFSSADYCSLDCSV) lie on the Extracellular side of the membrane.

The protein belongs to the riboflavin transporter family. In terms of tissue distribution, within the small intestine, it is particularly expressed in the jujenum and the ileum. Almost negligible expression in the stomach, duodenum, and large intestine.

The protein localises to the cell membrane. The enzyme catalyses riboflavin(in) = riboflavin(out). Its function is as follows. Plasma membrane transporter mediating the uptake by cells of the water soluble vitamin B2/riboflavin that plays a key role in biochemical oxidation-reduction reactions of the carbohydrate, lipid, and amino acid metabolism. The protein is Solute carrier family 52, riboflavin transporter, member 3 (Slc52a3) of Mus musculus (Mouse).